The sequence spans 197 residues: Imidazoleglycerol-phosphate dehydratase (197 aa).

It belongs to the imidazoleglycerol-phosphate dehydratase family.

It localises to the cytoplasm. It carries out the reaction D-erythro-1-(imidazol-4-yl)glycerol 3-phosphate = 3-(imidazol-4-yl)-2-oxopropyl phosphate + H2O. The protein operates within amino-acid biosynthesis; L-histidine biosynthesis; L-histidine from 5-phospho-alpha-D-ribose 1-diphosphate: step 6/9. This Chromobacterium violaceum (strain ATCC 12472 / DSM 30191 / JCM 1249 / CCUG 213 / NBRC 12614 / NCIMB 9131 / NCTC 9757 / MK) protein is Imidazoleglycerol-phosphate dehydratase.